Reading from the N-terminus, the 115-residue chain is Beta-2-microglobulin (115 aa).

Residues 1-18 (MGLLICSLLLGLLCCSMA) form the signal peptide. Residues 23-114 (PKVEVYTREP…KSKDHFLMIG (92 aa)) form the Ig-like C1-type domain.

Belongs to the beta-2-microglobulin family. In terms of assembly, heterodimer of an alpha chain and a beta chain. Beta-2-microglobulin is the beta-chain of major histocompatibility complex class I molecules.

Its subcellular location is the secreted. In terms of biological role, component of the class I major histocompatibility complex (MHC). Involved in the presentation of peptide antigens to the immune system. In Paralichthys olivaceus (Bastard halibut), this protein is Beta-2-microglobulin (b2m).